A 228-amino-acid chain; its full sequence is MNLNSIFGQFSPDYFLLMPMTLASMLMAISWLFFSNSTNWLPTRIGFSFLTFNQTIIKTIFQQTNPSSITWVPIITTVFILLFSVNVLGLLPYAFTATSHISLTYSIGIPIWMSVNILGFYLSFNSRLSHLVPQGTPSFLLPLMVIIETLSLFAQPIALGLRLAANLTAGHLLIYLMSTAIWVLMNNVAIASITLIIFILLFLLEIGVACIQAYVFTALIHFYLVQNL.

A run of 6 helical transmembrane segments spans residues 14–34 (YFLLMPMTLASMLMAISWLFF), 71–91 (WVPIITTVFILLFSVNVLGLL), 101–121 (ISLTYSIGIPIWMSVNILGFY), 139–159 (FLLPLMVIIETLSLFAQPIAL), 165–185 (ANLTAGHLLIYLMSTAIWVLM), and 188–208 (VAIASITLIIFILLFLLEIGV).

This sequence belongs to the ATPase A chain family. In terms of assembly, F-type ATPases have 2 components, CF(1) - the catalytic core - and CF(0) - the membrane proton channel. CF(1) has five subunits: alpha(3), beta(3), gamma(1), delta(1), epsilon(1). CF(0) has three main subunits: a, b and c.

The protein localises to the mitochondrion inner membrane. In terms of biological role, mitochondrial membrane ATP synthase (F(1)F(0) ATP synthase or Complex V) produces ATP from ADP in the presence of a proton gradient across the membrane which is generated by electron transport complexes of the respiratory chain. F-type ATPases consist of two structural domains, F(1) - containing the extramembraneous catalytic core and F(0) - containing the membrane proton channel, linked together by a central stalk and a peripheral stalk. During catalysis, ATP synthesis in the catalytic domain of F(1) is coupled via a rotary mechanism of the central stalk subunits to proton translocation. Key component of the proton channel; it may play a direct role in the translocation of protons across the membrane. This chain is ATP synthase subunit a (ATP6), found in Pisaster ochraceus (Ochre sea star).